Consider the following 119-residue polypeptide: Large ribosomal subunit protein uL24 (119 aa).

Belongs to the universal ribosomal protein uL24 family. As to quaternary structure, part of the 50S ribosomal subunit.

One of two assembly initiator proteins, it binds directly to the 5'-end of the 23S rRNA, where it nucleates assembly of the 50S subunit. Its function is as follows. Located at the polypeptide exit tunnel on the outside of the subunit. The chain is Large ribosomal subunit protein uL24 from Haloquadratum walsbyi (strain DSM 16790 / HBSQ001).